The chain runs to 812 residues: INO80 complex subunit D (812 aa).

2 disordered regions span residues 521 to 573 and 581 to 600; these read NSRK…LCMP and EVSS…ELPD. Residues 524–558 are compositionally biased toward basic residues; it reads KVQHHQQRKPRKKTKPPALTKKTKKKRRRGPRRPQ. Positions 585 to 595 are enriched in polar residues; sequence IRSPSTPNLST.

Belongs to the INO80D family. In terms of assembly, component of the chromatin-remodeling INO80 complex.

The protein resides in the nucleus. In terms of biological role, putative regulatory component of the chromatin remodeling INO80 complex which is involved in transcriptional regulation, DNA replication and probably DNA repair. This is INO80 complex subunit D from Xenopus laevis (African clawed frog).